We begin with the raw amino-acid sequence, 506 residues long: MQNFKELGISDNTVQSLESMGFKEPTPIQKDSIPYALQGIDILGQAQTGTGKTGAFGIPLIEKVVWKQGVQSLILAPTRELAMQVAEQLREFSRGQGVQVVTVFGGMPIERQIKALKKGPQIVVGTPGRVIDHLNRRTLKTDGIHTLILDEADEMMNMGFIDDMRFIMDKIPAVQRQTMLFSATMPKAIQALVQQFMKSPKIIKTMNNEMSDPQIEEFYTIVKELEKFDTFTNFLDVHQPELAIVFGRTKRRVDELTSALISKGYKAEGLHGDITQAKRLEVLKKFKNDQINILVATDVAARGLDISGVSHVYNFDIPQDTESYTHRIGRTGRAGKEGIAVTFVNPIEMDYIRQIEDANGRKMSALRPPHRKEVLQAREDDIKEKVENWMSKESESRLKRISTELLNEYNDVDLVAALLQELVEANDEVEVQLTFEKPLSRKGRNGKPSGSRNRNSKRGNPKFDSKSKRSKGYSSKKKSTKKFDRKEKSSGGSRPMKGRTFADHQK.

A Q motif motif is present at residues 2–30 (QNFKELGISDNTVQSLESMGFKEPTPIQK). In terms of domain architecture, Helicase ATP-binding spans 33–203 (IPYALQGIDI…QQFMKSPKII (171 aa)). Residue 46 to 53 (AQTGTGKT) coordinates ATP. Residues 150–153 (DEAD) carry the DEAD box motif. One can recognise a Helicase C-terminal domain in the interval 214 to 375 (QIEEFYTIVK…LRPPHRKEVL (162 aa)). Residues 436 to 506 (EKPLSRKGRN…KGRTFADHQK (71 aa)) are disordered. A compositionally biased stretch (basic residues) spans 468–480 (KRSKGYSSKKKST).

Belongs to the DEAD box helicase family. CshA subfamily. In terms of assembly, oligomerizes, may be a member of the RNA degradosome.

Its subcellular location is the cytoplasm. The catalysed reaction is ATP + H2O = ADP + phosphate + H(+). Functionally, DEAD-box RNA helicase possibly involved in RNA degradation. Unwinds dsRNA in both 5'- and 3'-directions, has RNA-dependent ATPase activity. The chain is DEAD-box ATP-dependent RNA helicase CshA from Staphylococcus aureus (strain bovine RF122 / ET3-1).